The chain runs to 77 residues: ATP synthase subunit c (77 aa).

Helical transmembrane passes span 7-27 and 57-77; these read AFKYLAASIAAGLAALAAALG and VGLIEAVPILAIVVAFLILFL.

This sequence belongs to the ATPase C chain family. In terms of assembly, F-type ATPases have 2 components, F(1) - the catalytic core - and F(0) - the membrane proton channel. F(1) has five subunits: alpha(3), beta(3), gamma(1), delta(1), epsilon(1). F(0) has three main subunits: a(1), b(2) and c(10-14). The alpha and beta chains form an alternating ring which encloses part of the gamma chain. F(1) is attached to F(0) by a central stalk formed by the gamma and epsilon chains, while a peripheral stalk is formed by the delta and b chains.

Its subcellular location is the cell membrane. F(1)F(0) ATP synthase produces ATP from ADP in the presence of a proton or sodium gradient. F-type ATPases consist of two structural domains, F(1) containing the extramembraneous catalytic core and F(0) containing the membrane proton channel, linked together by a central stalk and a peripheral stalk. During catalysis, ATP synthesis in the catalytic domain of F(1) is coupled via a rotary mechanism of the central stalk subunits to proton translocation. In terms of biological role, key component of the F(0) channel; it plays a direct role in translocation across the membrane. A homomeric c-ring of between 10-14 subunits forms the central stalk rotor element with the F(1) delta and epsilon subunits. This is ATP synthase subunit c from Lactobacillus helveticus (strain DPC 4571).